We begin with the raw amino-acid sequence, 392 residues long: Probable glycerol-3-phosphate dehydrogenase 2 (392 aa).

NAD(+) is bound by residues 42–47, F130, K153, and A196; that span reads GSGNWG. K153 lines the substrate pocket. K248 serves as the catalytic Proton acceptor. The NAD(+) site is built by R312 and Q341. Residue 312 to 313 participates in substrate binding; the sequence is RN.

Belongs to the NAD-dependent glycerol-3-phosphate dehydrogenase family. Homodimer.

It localises to the cytoplasm. It carries out the reaction sn-glycerol 3-phosphate + NAD(+) = dihydroxyacetone phosphate + NADH + H(+). The chain is Probable glycerol-3-phosphate dehydrogenase 2 (gpdh-2) from Caenorhabditis elegans.